A 199-amino-acid polypeptide reads, in one-letter code: MSVCPAPRSPVRWLHAFTLCLLLAVLAGCVSVPKPMAGAGEDVFSRVGRFAITVTESDGKQQAVQGGFAWRDDGGSYLLDLTNPLGSTEARVEGRPGMAVLTRANGERLAAEHPDALAEDALGSPVPVTGLRDWLRGRLMAGAAPDGLERDAQGRPTAFEQDGWNARLSRYDAQGPQLLVLQRQEPGRRILVRLVITQP.

The signal sequence occupies residues 1–28; it reads MSVCPAPRSPVRWLHAFTLCLLLAVLAG. Residue Cys29 is the site of N-palmitoyl cysteine attachment. A lipid anchor (S-diacylglycerol cysteine) is attached at Cys29.

The protein belongs to the LolB family. In terms of assembly, monomer.

Its subcellular location is the cell outer membrane. In terms of biological role, plays a critical role in the incorporation of lipoproteins in the outer membrane after they are released by the LolA protein. The protein is Outer-membrane lipoprotein LolB of Bordetella parapertussis (strain 12822 / ATCC BAA-587 / NCTC 13253).